The sequence spans 385 residues: Acetate kinase (385 aa).

Mg(2+) is bound at residue N9. ATP is bound at residue K16. A substrate-binding site is contributed by R87. The active-site Proton donor/acceptor is D144. Residues 202-206 (HLGSG) and 277-279 (DMR) contribute to the ATP site. Residue E373 coordinates Mg(2+).

It belongs to the acetokinase family. As to quaternary structure, homodimer. It depends on Mg(2+) as a cofactor. The cofactor is Mn(2+).

The protein resides in the cytoplasm. It carries out the reaction acetate + ATP = acetyl phosphate + ADP. It functions in the pathway metabolic intermediate biosynthesis; acetyl-CoA biosynthesis; acetyl-CoA from acetate: step 1/2. Catalyzes the formation of acetyl phosphate from acetate and ATP. Can also catalyze the reverse reaction. The polypeptide is Acetate kinase (Rickettsia typhi (strain ATCC VR-144 / Wilmington)).